The chain runs to 208 residues: ATP phosphoribosyltransferase (208 aa).

It belongs to the ATP phosphoribosyltransferase family. Short subfamily. As to quaternary structure, heteromultimer composed of HisG and HisZ subunits.

The protein resides in the cytoplasm. It catalyses the reaction 1-(5-phospho-beta-D-ribosyl)-ATP + diphosphate = 5-phospho-alpha-D-ribose 1-diphosphate + ATP. Its pathway is amino-acid biosynthesis; L-histidine biosynthesis; L-histidine from 5-phospho-alpha-D-ribose 1-diphosphate: step 1/9. Functionally, catalyzes the condensation of ATP and 5-phosphoribose 1-diphosphate to form N'-(5'-phosphoribosyl)-ATP (PR-ATP). Has a crucial role in the pathway because the rate of histidine biosynthesis seems to be controlled primarily by regulation of HisG enzymatic activity. This Thermotoga petrophila (strain ATCC BAA-488 / DSM 13995 / JCM 10881 / RKU-1) protein is ATP phosphoribosyltransferase.